A 524-amino-acid polypeptide reads, in one-letter code: uncharacterized protein (524 aa).

Over residues 83–101 (NSTPSKQAKPLQRNSPYQG) the composition is skewed to polar residues. 2 disordered regions span residues 83 to 108 (NSTPSKQAKPLQRNSPYQGNSQSENQ) and 155 to 179 (PPCNIETNEDDSGNNEYNNNKKRPR).

The protein localises to the cytoplasm. This is an uncharacterized protein from Saccharomyces cerevisiae (strain ATCC 204508 / S288c) (Baker's yeast).